Reading from the N-terminus, the 78-residue chain is Cytochrome c oxidase subunit 6b-2 (78 aa).

The CHCH domain maps to 22–65 (TRHCFTRYIEFHRCTTAKGEESNDCERFAKYYRALCPGEWVDKW). The short motif at 25 to 35 (CFTRYIEFHRC) is the Cx9C motif element. Cystine bridges form between C25–C57 and C35–C46. The Cx10C motif signature appears at 46 to 57 (CERFAKYYRALC).

The protein belongs to the cytochrome c oxidase subunit 6B (TC 3.D.4.8) family. As to expression, specifically expressed in roots.

Its subcellular location is the mitochondrion. This protein is one of the nuclear-coded polypeptide chains of cytochrome c oxidase, the terminal oxidase in mitochondrial electron transport. This protein may be one of the heme-binding subunits of the oxidase. The sequence is that of Cytochrome c oxidase subunit 6b-2 (COX6B-2) from Arabidopsis thaliana (Mouse-ear cress).